A 359-amino-acid polypeptide reads, in one-letter code: 3-dehydroquinate synthase (359 aa).

Residues 71-76 (DGEAHK), 105-109 (GVIGD), 129-130 (TT), lysine 142, lysine 151, and 169-172 (TLHT) each bind NAD(+). Residues glutamate 184, histidine 247, and histidine 264 each coordinate Zn(2+).

This sequence belongs to the sugar phosphate cyclases superfamily. Dehydroquinate synthase family. Co(2+) serves as cofactor. Requires Zn(2+) as cofactor. NAD(+) is required as a cofactor.

It is found in the cytoplasm. The catalysed reaction is 7-phospho-2-dehydro-3-deoxy-D-arabino-heptonate = 3-dehydroquinate + phosphate. The protein operates within metabolic intermediate biosynthesis; chorismate biosynthesis; chorismate from D-erythrose 4-phosphate and phosphoenolpyruvate: step 2/7. Catalyzes the conversion of 3-deoxy-D-arabino-heptulosonate 7-phosphate (DAHP) to dehydroquinate (DHQ). The chain is 3-dehydroquinate synthase from Neisseria meningitidis serogroup C (strain 053442).